The chain runs to 1084 residues: MTNTIPNWIKLNNEIMIQKDGKYQFEKDKEAVHSYFVDYINQNTVFFHDLKEKLDYLIKNDYYEEEFLSKYTFEQIKSIYKIAYSYKFRFPSFMSAFKFYNDYALKTNDKTKILERYEDRVSIVALYCADGDYEKAVEEVHTMMKQEYQPATPTFLNAGRKRRGEMVSCFLLEVGDSLNDISRAIDISMQLSKLGGGVALNLNKLRAKGEAIKDVENATKGVVGVMKLLDNAFRYADQMGQRQGSGAVYLSVFHPDITDFLDTKKISADEDVRVKTLSIGVVVPDKFIELAREDKDYYMFYPHSVYKEYGQYLDELDINEMYDELVENPRVRKAKGNARKLLEQLAILRSESGYPYIMFADNVNKVHPNEHISKVKFSNLCVTGETLLLTENGYEKAADLYKKQNDLKVVIDNRTKDFAVGSKGTTIVDAIPMQLTKKDAEIFKVKTKQGYEIRATEWHKFYVKRDGEIQKLQLNQLKTGDKLLVQSAEGAYGKIHEPDLAYIMGIIAGDGTITEKTAKIYLYDNKKVLEQKVTDAVHRIIQKHKVDRAYKHNTSLLPTFNMANPEKQDLLYMNSTVLFDILKKFGMNKETKTRVPEFIFQANKETQAAYLSGLFQTDGCVNANHKAKALTIELTSIHYESLQDVQKLLLNMGVYTTIYSNNKRSQELLPDGKGGSKLYNVKPTHKISIQDRNSRELFMSIVEMKEYDVYKFNLLTETLQPKSRKPKHDFTAEIISIEEDGVEDVYDTTQEDYHSLIFNGIVTGNCSEVLQSSQVSVYTDYDKEDEIGLDISCNLGSMNIVNVMSNQSIASTVRIAIDSLTTVTRKTNIVNAPAVARANTLMRSIGLGQMNLHGFLAQNNIAYESEEAKDFANTYFMMVNFYSLQRSMEIARETGETYYKFDGSTYKSGEYFEKYVTNDYSPQYEKVKKLFGDQHIPNIQDWMKLKEDVMKYGLYHSYRQAIAPTGSISYVQSSTAGVMPIMERIEERTYGNSKTYYPMPGLSAQNWFFYKEAYDMDMFKVVDLIATIQQHVDQGISFTLFLKDTMTTRDLNRIDLYAHHRGIKTLYYARTKDTTQEGCLSCVV.

Residues T152, 168–169, and G197 each bind substrate; that span reads SC. A disulfide bridge connects residues C169 and C793. N379 (proton acceptor) is an active-site residue. The active-site Cysteine radical intermediate is the C381. Positions 503–654 constitute a DOD-type homing endonuclease domain; it reads IMGIIAGDGT…VQKLLLNMGV (152 aa). E768 serves as the catalytic Proton acceptor. Substrate is bound at residue 964–968; the sequence is PTGSI.

The protein belongs to the ribonucleoside diphosphate reductase large chain family. Tetramer of two alpha and two beta subunits. In terms of processing, this protein undergoes protein self-splicing that involves post-translational excision of the intervening region (intein) followed by peptide ligation.

The enzyme catalyses a 2'-deoxyribonucleoside 5'-diphosphate + [thioredoxin]-disulfide + H2O = a ribonucleoside 5'-diphosphate + [thioredoxin]-dithiol. Under complex allosteric control mediated by deoxynucleoside triphosphates and ATP binding. The type of nucleotide bound at the specificity site determines substrate preference. It seems probable that ATP makes the enzyme reduce CDP and UDP, dGTP favors ADP reduction and dTTP favors GDP reduction. Provides the precursors necessary for DNA synthesis. Catalyzes the biosynthesis of deoxyribonucleotides from the corresponding ribonucleotides. The polypeptide is Ribonucleoside-diphosphate reductase NrdEB subunit alpha (nrdEB) (Bacillus subtilis (strain 168)).